Consider the following 491-residue polypeptide: Chromosomal replication initiator protein DnaA (491 aa).

A domain I, interacts with DnaA modulators region spans residues 1–69 (MTTWDKCLKK…TIQECHGNDL (69 aa)). A domain II region spans residues 69–154 (LIIEYSNKKF…KEDEEYSFGL (86 aa)). Residues 155-371 (PLKEKYVFDS…GALNRVLTTS (217 aa)) are domain III, AAA+ region. Residues Gly-199, Gly-201, Lys-202, and Thr-203 each contribute to the ATP site. The interval 372–491 (KFNHKDPTIE…YELLLDKISR (120 aa)) is domain IV, binds dsDNA.

It belongs to the DnaA family. In terms of assembly, oligomerizes as a right-handed, spiral filament on DNA at oriC.

The protein resides in the cytoplasm. Functionally, plays an essential role in the initiation and regulation of chromosomal replication. ATP-DnaA binds to the origin of replication (oriC) to initiate formation of the DNA replication initiation complex once per cell cycle. Binds the DnaA box (a 9 base pair repeat at the origin) and separates the double-stranded (ds)DNA. Forms a right-handed helical filament on oriC DNA; dsDNA binds to the exterior of the filament while single-stranded (ss)DNA is stabiized in the filament's interior. The ATP-DnaA-oriC complex binds and stabilizes one strand of the AT-rich DNA unwinding element (DUE), permitting loading of DNA polymerase. After initiation quickly degrades to an ADP-DnaA complex that is not apt for DNA replication. Binds acidic phospholipids. This chain is Chromosomal replication initiator protein DnaA, found in Francisella tularensis subsp. holarctica (strain OSU18).